A 389-amino-acid chain; its full sequence is Mesotocin receptor (389 aa).

At M1–V50 the chain is on the extracellular side. Residues N15, N20, N27, and N31 are each glycosylated (N-linked (GlcNAc...) asparagine). Residues L51–I71 form a helical membrane-spanning segment. The Cytoplasmic segment spans residues N72–S87. Residues I88–F108 form a helical membrane-spanning segment. At R109–L119 the chain is on the extracellular side. An intrachain disulfide couples C117 to C192. The chain crosses the membrane as a helical span at residues V120 to L140. At D141 to C159 the chain is on the cytoplasmic side. Residues V160–F180 traverse the membrane as a helical segment. At S181 to T207 the chain is on the extracellular side. The chain crosses the membrane as a helical span at residues W208–I228. Residues S229–M275 are Cytoplasmic-facing. A helical membrane pass occupies residues T276 to W296. The Extracellular segment spans residues S297–S308. A helical membrane pass occupies residues L309–M329. Over L330–A389 the chain is Cytoplasmic. The disordered stretch occupies residues L360–A389.

The protein belongs to the G-protein coupled receptor 1 family. Vasopressin/oxytocin receptor subfamily. Highly expressed in the bladder. Also expressed in kidney, brain and skeletal muscle.

The protein resides in the cell membrane. Binds to mesotocin and may play a role in the regulation of water and salt transport. This Rhinella marina (Cane toad) protein is Mesotocin receptor.